A 328-amino-acid polypeptide reads, in one-letter code: tRNA U34 carboxymethyltransferase (328 aa).

Carboxy-S-adenosyl-L-methionine-binding positions include Lys91, Trp105, Lys110, Gly130, 181–182 (IE), Met196, Tyr200, and Arg315.

This sequence belongs to the class I-like SAM-binding methyltransferase superfamily. CmoB family. Homotetramer.

It catalyses the reaction carboxy-S-adenosyl-L-methionine + 5-hydroxyuridine(34) in tRNA = 5-carboxymethoxyuridine(34) in tRNA + S-adenosyl-L-homocysteine + H(+). Catalyzes carboxymethyl transfer from carboxy-S-adenosyl-L-methionine (Cx-SAM) to 5-hydroxyuridine (ho5U) to form 5-carboxymethoxyuridine (cmo5U) at position 34 in tRNAs. The chain is tRNA U34 carboxymethyltransferase from Pectobacterium carotovorum subsp. carotovorum (strain PC1).